The chain runs to 370 residues: Pyrimidine monooxygenase RutA (370 aa).

Residues 49–50 (IK), N115, E124, 140–141 (RY), and S190 each bind FMN.

It belongs to the NtaA/SnaA/DszA monooxygenase family. RutA subfamily.

The catalysed reaction is uracil + FMNH2 + NADH + O2 = (Z)-3-ureidoacrylate + FMN + NAD(+) + H2O + H(+). It catalyses the reaction thymine + FMNH2 + NADH + O2 = (Z)-2-methylureidoacrylate + FMN + NAD(+) + H2O + H(+). Catalyzes the pyrimidine ring opening between N-3 and C-4 by an unusual flavin hydroperoxide-catalyzed mechanism, adding oxygen atoms in the process to yield ureidoacrylate peracid, that immediately reacts with FMN forming ureidoacrylate and FMN-N(5)-oxide. The FMN-N(5)-oxide reacts spontaneously with NADH to produce FMN. Requires the flavin reductase RutF to regenerate FMN in vivo. The chain is Pyrimidine monooxygenase RutA from Variovorax paradoxus (strain S110).